Here is a 590-residue protein sequence, read N- to C-terminus: Vesicular glutamate transporter 3 (590 aa).

The Cytoplasmic portion of the chain corresponds to 1–76; it reads MPLGGFAGLK…CGCFGLPKRY (76 aa). The helical transmembrane segment at 77 to 97 threads the bilayer; that stretch reads IIAMLSGLGFCISFGIRCNLG. Residues 98–130 lie on the Vesicular side of the membrane; it reads VAIVEMVNNNTVYINGTAVMQPAQFNWDPETVG. Asn-106 and Asn-112 each carry an N-linked (GlcNAc...) asparagine glycan. A helical transmembrane segment spans residues 131–151; the sequence is LIHGSFFWGYIVTQIPGGFIS. The Cytoplasmic segment spans residues 152 to 153; it reads NK. The helical transmembrane segment at 154 to 174 threads the bilayer; sequence LAANRVFGAAIFLTSVLNMFI. Topologically, residues 175–182 are vesicular; it reads PSAARVHY. A helical membrane pass occupies residues 183-203; that stretch reads GCVMFVRILQGLVEGVTYPAC. At 204–221 the chain is on the cytoplasmic side; sequence HGMWSKWAPPLERSRLAT. A helical transmembrane segment spans residues 222–242; the sequence is TSFCGSYAGAVIAMPLAGILV. Over 243–249 the chain is Vesicular; the sequence is QYVGWPS. The helical transmembrane segment at 250–270 threads the bilayer; that stretch reads VFYIYGVFGIIWYIFWILLAY. At 271–315 the chain is on the cytoplasmic side; the sequence is NSPAVHPTISEEERNYIETSIGEGANLMSSTEKFKTPWREFFTSM. Residues 316–336 form a helical membrane-spanning segment; sequence PVYAIIVANFCRSWTFYLLLI. At 337–354 the chain is on the vesicular side; that stretch reads SQPAYFEEVFGFPISKVG. The chain crosses the membrane as a helical span at residues 355–375; it reads ILSAVPHMVMTIIVPIGGQLA. Residues 376-391 lie on the Cytoplasmic side of the membrane; the sequence is DFLRSRKILSTTTVRK. The chain crosses the membrane as a helical span at residues 392 to 412; that stretch reads IMNCGGFGMEATLLLVVGFSH. At 413-414 the chain is on the vesicular side; it reads TR. The helical transmembrane segment at 415-435 threads the bilayer; the sequence is AVAISFLILAVGFSGFAISGF. Over 436-448 the chain is Cytoplasmic; that stretch reads NVNHLDIAPRYAS. The helical transmembrane segment at 449 to 469 threads the bilayer; it reads ILMGISNGVGTLSGMVCPLIV. Topologically, residues 470 to 482 are vesicular; the sequence is GALTKHKTRLEWQ. The helical transmembrane segment at 483–503 threads the bilayer; it reads HVFVIASMVHYTGVIFYAIFA. The Cytoplasmic segment spans residues 504–587; it reads SGEKQDWADP…NHYENGEYQT (84 aa). Residues 526 to 535 show a composition bias toward acidic residues; it reads EDELADETEP. The segment at 526–590 is disordered; it reads EDELADETEP…ENGEYQTQYQ (65 aa). Residues 536 to 557 are compositionally biased toward polar residues; that stretch reads SSDSGLATRQKTYGTTDNSSGR.

Belongs to the major facilitator superfamily. Sodium/anion cotransporter family. VGLUT subfamily.

Its subcellular location is the cytoplasmic vesicle. It is found in the secretory vesicle. The protein localises to the synaptic vesicle membrane. The protein resides in the cell membrane. It localises to the synapse. Its subcellular location is the synaptosome. The catalysed reaction is L-glutamate(out) = L-glutamate(in). The enzyme catalyses 3 Na(+)(out) + phosphate(out) = 3 Na(+)(in) + phosphate(in). It catalyses the reaction chloride(in) = chloride(out). With respect to regulation, the L-glutamate uniporter activity exhibits a biphasic dependence on chloride concentration. Chloride channel activity is allosterically activated by lumenal H(+) and Cl(-) leading to synaptic vesicles acidification. The glutamate transport activity is allosterically activated by lumenal H(+) and Cl(-), preventing non-vesicular L-glutamate release. Functionally, multifunctional transporter that transports L-glutamate as well as multiple ions such as chloride, sodium and phosphate. At the synaptic vesicle membrane, mainly functions as an uniporter that mediates the uptake of L-glutamate into synaptic vesicles at presynaptic nerve terminals of excitatory neural cells. The L-glutamate uniporter activity is electrogenic and is driven by the proton electrochemical gradient, mainly by the electrical gradient established by the vacuolar H(+)-ATPase across the synaptic vesicle membrane. In addition, functions as a chloride channel that allows a chloride permeation through the synaptic vesicle membrane that affects the proton electrochemical gradient and promotes synaptic vesicles acidification. At the plasma membrane, following exocytosis, functions as a symporter of Na(+) and phosphate from the extracellular space to the cytoplasm allowing synaptic phosphate homeostasis regulation. The symporter activity is electrogenic. Moreover, operates synergistically with SLC18A3/VACHT under a constant H(+) gradient, thereby allowing striatal vesicular acetylcholine uptake. This is Vesicular glutamate transporter 3 from Danio rerio (Zebrafish).